A 163-amino-acid polypeptide reads, in one-letter code: Transcriptional repressor NrdR (163 aa).

A zinc finger lies at cysteine 3 to cysteine 34. Positions leucine 46–aspartate 136 constitute an ATP-cone domain.

Belongs to the NrdR family. Zn(2+) is required as a cofactor.

Its function is as follows. Negatively regulates transcription of bacterial ribonucleotide reductase nrd genes and operons by binding to NrdR-boxes. The polypeptide is Transcriptional repressor NrdR (Corynebacterium jeikeium (strain K411)).